Reading from the N-terminus, the 346-residue chain is Parapinopsin (346 aa).

At 1–29 (MASIILINFSETDTLHLGSVNDHIMPRIG) the chain is on the extracellular side. N-linked (GlcNAc...) asparagine glycosylation is present at asparagine 8. Residues 30–54 (YTILSIIMALSSTFGIILNMVVIIV) form a helical membrane-spanning segment. Topologically, residues 55–66 (TVRYKQLRQPLN) are cytoplasmic. A helical transmembrane segment spans residues 67-91 (YALVNLAVADLGCPVFGGLLTAVTN). Over 92–106 (AMGYFSLGRVGCVLE) the chain is Extracellular. The cysteines at positions 103 and 180 are disulfide-linked. The helical transmembrane segment at 107–126 (GFAVAFFGIAGLCSVAVIAV) threads the bilayer. Residues 127–145 (DRYMVVCRPLGAVMFQTKH) lie on the Cytoplasmic side of the membrane. Residues 146–169 (ALAGVVFSWVWSFIWNTPPLFGWG) form a helical membrane-spanning segment. Residues 170-193 (SYQLEGVMTSCAPNWYRRDPVNVS) lie on the Extracellular side of the membrane. Asparagine 191 carries N-linked (GlcNAc...) asparagine glycosylation. Residues 194-221 (YILCYFMLCFALPFATIIFSYMHLLHTL) traverse the membrane as a helical segment. At 222-244 (WQVAKLQVADSGSTAKVEVQVAR) the chain is on the cytoplasmic side. A helical membrane pass occupies residues 245 to 268 (MVVIMVMAFLLTWLPYAAFALTVI). At 269–276 (IDSNIYIN) the chain is on the extracellular side. A helical membrane pass occupies residues 277–301 (PVIGTIPAYLAKSSTVFNPIIYIFM). Lysine 288 is modified (N6-(retinylidene)lysine). The Cytoplasmic segment spans residues 302 to 346 (NRQFRDYALPCLLCGKNPWAAKEGRDSDTNTLTTTVSKNTSVSPL). Cysteine 315 carries S-palmitoyl cysteine lipidation. The disordered stretch occupies residues 325–346 (GRDSDTNTLTTTVSKNTSVSPL). Residues 330 to 346 (TNTLTTTVSKNTSVSPL) show a composition bias toward low complexity.

Belongs to the G-protein coupled receptor 1 family. Opsin subfamily. Phosphorylated on some or all of the serine and threonine residues present in the C-terminal region. As to expression, parapineal organ.

It is found in the membrane. The sequence is that of Parapinopsin from Ictalurus punctatus (Channel catfish).